We begin with the raw amino-acid sequence, 218 residues long: Probable cutinase 3 (218 aa).

Residues M1–A17 form the signal peptide. 2 disulfide bridges follow: C41/C120 and C67/C81. The active-site Nucleophile is the S131. A disulfide bridge links C182 with C189. The active site involves D186. The active-site Proton donor/acceptor is H199.

It belongs to the cutinase family.

It is found in the secreted. The enzyme catalyses cutin + H2O = cutin monomers.. Catalyzes the hydrolysis of complex carboxylic polyesters found in the cell wall of plants. Degrades cutin, a macromolecule that forms the structure of the plant cuticle. This is Probable cutinase 3 from Aspergillus terreus (strain NIH 2624 / FGSC A1156).